The chain runs to 521 residues: Probable xyloglucan galactosyltransferase GT14 (521 aa).

At 1-30 the chain is on the cytoplasmic side; sequence MRPKNYSQMEKPISITTGKFRTNNNNNHNN. Residues 31 to 51 form a helical; Signal-anchor for type II membrane protein membrane-spanning segment; the sequence is VWFVVPLFFILCFVLLCFDYS. At 52–521 the chain is on the lumenal side; the sequence is ALFTDTDETA…SPYEEPQVLA (470 aa). The segment at 72–92 is disordered; sequence TSSEFTKDDNFSRFPDDPSPD. Residues 76 to 87 are compositionally biased toward basic and acidic residues; it reads FTKDDNFSRFPD. Residues Asn-81, Asn-177, Asn-203, Asn-249, Asn-265, and Asn-411 are each glycosylated (N-linked (GlcNAc...) asparagine). Residues 492 to 521 are disordered; that stretch reads RQGKDGSDGFDDRDDYKYTFSPYEEPQVLA.

This sequence belongs to the glycosyltransferase 47 family. In terms of tissue distribution, expressed in roots, hypocotyls, cotyledons, leaves, stems, stamens and carpels.

The protein localises to the golgi apparatus membrane. Its function is as follows. Functions in xyloglucan synthesis by adding side chains to the xylosylated glucan backbone. Involved in the galactosylation of hemicellulose xyloglucan. The sequence is that of Probable xyloglucan galactosyltransferase GT14 from Arabidopsis thaliana (Mouse-ear cress).